We begin with the raw amino-acid sequence, 101 residues long: Large ribosomal subunit protein uL24 (101 aa).

This sequence belongs to the universal ribosomal protein uL24 family. As to quaternary structure, part of the 50S ribosomal subunit.

One of two assembly initiator proteins, it binds directly to the 5'-end of the 23S rRNA, where it nucleates assembly of the 50S subunit. Functionally, one of the proteins that surrounds the polypeptide exit tunnel on the outside of the subunit. The sequence is that of Large ribosomal subunit protein uL24 from Streptococcus equi subsp. zooepidemicus (strain H70).